We begin with the raw amino-acid sequence, 292 residues long: 4-hydroxy-tetrahydrodipicolinate synthase (292 aa).

Position 45 (Thr45) interacts with pyruvate. Catalysis depends on Tyr133, which acts as the Proton donor/acceptor. Lys161 acts as the Schiff-base intermediate with substrate in catalysis. Ile203 serves as a coordination point for pyruvate.

The protein belongs to the DapA family. In terms of assembly, homotetramer; dimer of dimers.

It localises to the cytoplasm. The catalysed reaction is L-aspartate 4-semialdehyde + pyruvate = (2S,4S)-4-hydroxy-2,3,4,5-tetrahydrodipicolinate + H2O + H(+). It participates in amino-acid biosynthesis; L-lysine biosynthesis via DAP pathway; (S)-tetrahydrodipicolinate from L-aspartate: step 3/4. Catalyzes the condensation of (S)-aspartate-beta-semialdehyde [(S)-ASA] and pyruvate to 4-hydroxy-tetrahydrodipicolinate (HTPA). This Vibrio cholerae serotype O1 (strain M66-2) protein is 4-hydroxy-tetrahydrodipicolinate synthase.